The primary structure comprises 553 residues: Protein DA1-related 1 (553 aa).

The disordered stretch occupies residues 10 to 41 (GSSHKFSDGQCNGRYREDRNLEGPRYSAEGSD). A UIM 1 domain is found at 42–61 (FDKEEIECAIALSLSEQEHV). A compositionally biased stretch (basic and acidic residues) spans 62–77 (IPQDDKGKKIIEYKSE). The segment at 62 to 91 (IPQDDKGKKIIEYKSETEEDDDDDEDEDEE) is disordered. A compositionally biased stretch (acidic residues) spans 78–91 (TEEDDDDDEDEDEE). In terms of domain architecture, UIM 2 spans 87–106 (DEDEEYMRAQLEAAEEEERR). Residues 122 to 141 (AQLEETEKLLAKARLEEEEM) form the UIM 3; degenerate domain. Positions 149 to 168 (EEDELLAKALQESMNVGSPP) constitute a UIM 4 domain. At S166 the chain carries Phosphoserine. The region spanning 188 to 248 (RICVGCQAEI…KLCYKEQHHP (61 aa)) is the LIM zinc-binding domain.

Interacts with ubiquitin, TCP14 and TCP15. Polyubiquitinated by DA2.

Functionally, acts redundantly with DA1 and DAR2 to regulate endoreduplication during leaf development. Together with DA1 and DAR2, modulates the protein stability of the transcription factors TCP14 and TCP15, which repress endoreduplication by directly regulating the expression of cell-cycle genes. This Arabidopsis thaliana (Mouse-ear cress) protein is Protein DA1-related 1.